Here is a 71-residue protein sequence, read N- to C-terminus: Large ribosomal subunit protein bL31 (71 aa).

Zn(2+) is bound by residues Cys16, Cys18, Cys37, and Cys40.

Belongs to the bacterial ribosomal protein bL31 family. Type A subfamily. In terms of assembly, part of the 50S ribosomal subunit. Zn(2+) serves as cofactor.

Binds the 23S rRNA. The protein is Large ribosomal subunit protein bL31 of Solidesulfovibrio magneticus (strain ATCC 700980 / DSM 13731 / RS-1) (Desulfovibrio magneticus).